Here is a 372-residue protein sequence, read N- to C-terminus: Glutamate 5-kinase (372 aa).

K14 is an ATP binding site. Residues S54, D141, and N153 each coordinate substrate. 173 to 174 is a binding site for ATP; sequence TD. One can recognise a PUA domain in the interval 280–358; it reads RGHVVIDAGA…GEIETVLGYM (79 aa).

This sequence belongs to the glutamate 5-kinase family.

Its subcellular location is the cytoplasm. It carries out the reaction L-glutamate + ATP = L-glutamyl 5-phosphate + ADP. The protein operates within amino-acid biosynthesis; L-proline biosynthesis; L-glutamate 5-semialdehyde from L-glutamate: step 1/2. Functionally, catalyzes the transfer of a phosphate group to glutamate to form L-glutamate 5-phosphate. This is Glutamate 5-kinase from Burkholderia vietnamiensis (strain G4 / LMG 22486) (Burkholderia cepacia (strain R1808)).